The sequence spans 159 residues: ATP synthase subunit b 2 (159 aa).

A helical transmembrane segment spans residues methionine 1 to methionine 21.

The protein belongs to the ATPase B chain family. In terms of assembly, F-type ATPases have 2 components, F(1) - the catalytic core - and F(0) - the membrane proton channel. F(1) has five subunits: alpha(3), beta(3), gamma(1), delta(1), epsilon(1). F(0) has three main subunits: a(1), b(2) and c(10-14). The alpha and beta chains form an alternating ring which encloses part of the gamma chain. F(1) is attached to F(0) by a central stalk formed by the gamma and epsilon chains, while a peripheral stalk is formed by the delta and b chains.

It is found in the cell inner membrane. In terms of biological role, f(1)F(0) ATP synthase produces ATP from ADP in the presence of a proton or sodium gradient. F-type ATPases consist of two structural domains, F(1) containing the extramembraneous catalytic core and F(0) containing the membrane proton channel, linked together by a central stalk and a peripheral stalk. During catalysis, ATP synthesis in the catalytic domain of F(1) is coupled via a rotary mechanism of the central stalk subunits to proton translocation. Its function is as follows. Component of the F(0) channel, it forms part of the peripheral stalk, linking F(1) to F(0). The polypeptide is ATP synthase subunit b 2 (Brucella canis (strain ATCC 23365 / NCTC 10854 / RM-666)).